We begin with the raw amino-acid sequence, 530 residues long: Arginine-containing cyclodipeptide synthase pthA (530 aa).

Positions 419–423 (DDRAE) match the Conserved DDXXE motif motif.

This sequence belongs to the arginine-containing cyclodipeptide synthase family.

The catalysed reaction is L-aspartyl-tRNA(Asp) + L-arginyl-tRNA(Arg) = cyclo(L-arginyl-L-aspartyl) + tRNA(Asp) + tRNA(Arg) + 2 H(+). Its pathway is secondary metabolite biosynthesis. Functionally, arginine-containing cyclodipeptide synthase; part of the cluster that mediates the biosynthesis of a highly modified cyclo-arginine-aspartate dipeptide (cRD). Within the pathway, pthA acts as the scaffold-generating enzyme and is responsible for formation of the cyclo-Arg-Asp diketopiperazine (cRW) from L-arginyl-tRNA(Arg) + L-aspartyl-tRNA(Asp). Additional enzymes from the cluster then further modify the cyclo-Arg-Asp diketopiperazine (cRW) scaffold. The polypeptide is Arginine-containing cyclodipeptide synthase pthA (Penicillium thymicola).